Here is a 220-residue protein sequence, read N- to C-terminus: Ribose-5-phosphate isomerase A (220 aa).

Substrate contacts are provided by residues 28-31 (TGST), 81-84 (DGAD), and 94-97 (KGGG). Glu103 serves as the catalytic Proton acceptor. Position 121 (Lys121) interacts with substrate.

It belongs to the ribose 5-phosphate isomerase family. In terms of assembly, homodimer.

The enzyme catalyses aldehydo-D-ribose 5-phosphate = D-ribulose 5-phosphate. It functions in the pathway carbohydrate degradation; pentose phosphate pathway; D-ribose 5-phosphate from D-ribulose 5-phosphate (non-oxidative stage): step 1/1. Its function is as follows. Catalyzes the reversible conversion of ribose-5-phosphate to ribulose 5-phosphate. This Leptothrix cholodnii (strain ATCC 51168 / LMG 8142 / SP-6) (Leptothrix discophora (strain SP-6)) protein is Ribose-5-phosphate isomerase A.